Reading from the N-terminus, the 369-residue chain is Serine/threonine-protein acetyltransferase HopZ1a (369 aa).

The disordered stretch occupies residues 1–46 (MGNVCVGGSRMSHQVYSPDRADTPPRSERNTPDRRQRAAGDAERTQ). A compositionally biased stretch (basic and acidic residues) spans 19-46 (DRADTPPRSERNTPDRRQRAAGDAERTQ). 1D-myo-inositol hexakisphosphate is bound by residues Arg49, Lys53, and Arg106. Active-site residues include His150 and Glu170. His150 is a CoA binding site. Residues Ala177 and 211–212 (KT) each bind CoA. Residue Cys216 is part of the active site. 1D-myo-inositol hexakisphosphate is bound by residues Asn222, 226–229 (KAHK), and 289–290 (KH). Lys289 is modified (N6-acetyllysine; by autocatalysis). A CoA-binding site is contributed by 292 to 295 (ASLT). 1D-myo-inositol hexakisphosphate is bound by residues 314–317 (SEGH) and Arg326. CoA is bound by residues 331–334 (RVKR) and 344–348 (SNTQF). Gln358 and Arg362 together coordinate 1D-myo-inositol hexakisphosphate.

This sequence belongs to the acetyltransferase YopJ family. In terms of assembly, interacts with host plant JAZ proteins (e.g. Glycine max JAZ1 and Arabidospis thaliana TIFY10B/JAZ2, TIFY11A/JAZ5, TIFY11B/JAZ6, TIFY5A/JAZ8 and TIFY3B/JAZ12) and triggers their degradation. Binds directly to SZE1 and SZE2 at the host plasma membrane; this interaction with a complex made of, at least, SZE1, BKN2/SZE2, ZAR1 and ZED1 triggers host immunity. It depends on 1D-myo-inositol hexakisphosphate as a cofactor. In terms of processing, autoacetylated at Lys-289; while autoacetylation at Lys-289 is required for virulence function to some extent, it is not essential.

The protein resides in the secreted. It localises to the host cell membrane. Its subcellular location is the host cytoplasm. The protein localises to the host cytoskeleton. It is found in the host nucleus. The catalysed reaction is L-threonyl-[protein] + acetyl-CoA = O-acetyl-L-threonyl-[protein] + CoA. It carries out the reaction L-seryl-[protein] + acetyl-CoA = O-acetyl-L-seryl-[protein] + CoA. It catalyses the reaction L-lysyl-[protein] + acetyl-CoA = N(6)-acetyl-L-lysyl-[protein] + CoA + H(+). With respect to regulation, 1D-myo-inositol hexakisphosphate activates protein-acetyltransferase activity via an allosteric mechanism: 1D-myo-inositol hexakisphosphate-binding induces a conformational rearrangement that stimulates the interaction with acetyl-CoA. Acetyltransferase activity is activated by phytic acid. Serine/threonine-protein acetyltransferase translocated into infected cells, which impairs host microtubule network and host immunity by mediating acetylation of target proteins. Blocks secretion in host cells by mediating acetylation of host tubulin, thereby impairing host microbubule network. Impairs host cell immunity by mediating acetylation of host TIFY/JAZ transcription repressors (Arabidopsis thaliana TIFY10B/JAZ2, TIFY11A/JAZ5, TIFY11B/JAZ6, TIFY5A/JAZ8, TIFY9/JAZ10 and TIFY3B/JAZ12), thereby activating host jasmonate signaling. The protein is Serine/threonine-protein acetyltransferase HopZ1a of Pseudomonas syringae pv. syringae.